The chain runs to 23 residues: Alpha-amanitin proprotein (23 aa).

Isoleucine 1 carries the post-translational modification (3R,4R)-4,5-dihydroxyisoleucine; in form alpha-amanitin. Isoleucine 1 is modified ((3R,4S)-4-hydroxyisoleucine; in form gamma-amanitin). The cyclopeptide (Ile-Pro) cross-link spans 1–8 (IWGIGCNP). Residues 2–6 (WGIGC) constitute a cross-link (2'-cysteinyl-6'-hydroxytryptophan sulfoxide (Trp-Cys)). Position 8 is a 4-hydroxyproline (proline 8). A propeptide spanning residues 9–23 (CVGDEVTALITRGEA) is cleaved from the precursor.

Belongs to the MSDIN fungal toxin family. In terms of processing, processed by the macrocyclase-peptidase enzyme POPB to yield a toxic cyclic decapeptide. POPB first removes 10 residues from the N-terminus. Conformational trapping of the remaining peptide forces the enzyme to release this intermediate rather than proceed to macrocyclization. The enzyme rebinds the remaining peptide in a different conformation and catalyzes macrocyclization of the N-terminal 8 residues.

Its function is as follows. Major toxin belonging to the bicyclic octapeptides amatoxins that acts by binding non-competitively to RNA polymerase II and greatly slowing the elongation of transcripts from target promoters. This chain is Alpha-amanitin proprotein, found in Amanita fuligineoides.